Reading from the N-terminus, the 501-residue chain is Amidophosphoribosyltransferase (501 aa).

Cys-2 serves as the catalytic Nucleophile. The 233-residue stretch at 2–234 folds into the Glutamine amidotransferase type-2 domain; the sequence is CGIVGIVGKS…PGEAVYITEE (233 aa). Residues Thr-303, Asp-365, and Asp-366 each coordinate Mg(2+).

It in the C-terminal section; belongs to the purine/pyrimidine phosphoribosyltransferase family. Requires Mg(2+) as cofactor.

The enzyme catalyses 5-phospho-beta-D-ribosylamine + L-glutamate + diphosphate = 5-phospho-alpha-D-ribose 1-diphosphate + L-glutamine + H2O. Its pathway is purine metabolism; IMP biosynthesis via de novo pathway; N(1)-(5-phospho-D-ribosyl)glycinamide from 5-phospho-alpha-D-ribose 1-diphosphate: step 1/2. In terms of biological role, catalyzes the formation of phosphoribosylamine from phosphoribosylpyrophosphate (PRPP) and glutamine. The polypeptide is Amidophosphoribosyltransferase (Pseudomonas aeruginosa (strain ATCC 15692 / DSM 22644 / CIP 104116 / JCM 14847 / LMG 12228 / 1C / PRS 101 / PAO1)).